A 262-amino-acid polypeptide reads, in one-letter code: Nodulation protein J (262 aa).

The ABC transmembrane type-2 domain occupies 33–259; it reads ASLLGHLAEP…FLSTALLRRR (227 aa). 6 helical membrane-spanning segments follow: residues 35–55, 60–80, 125–145, 148–168, 177–197, and 231–251; these read LLGH…GLGV, VGGV…SAMT, AALA…TQWL, LYAL…GMVV, YFIF…GAVF, and VVDV…PFFL.

The protein belongs to the ABC-2 integral membrane protein family. Lipooligosaccharide exporter (TC 3.A.1.102) subfamily. As to quaternary structure, the complex is composed of two ATP-binding proteins (NodI) and two transmembrane proteins (NodJ).

Its subcellular location is the cell inner membrane. In terms of biological role, part of the ABC transporter complex NodIJ involved in the export of the nodulation factors (Nod factors), the bacterial signal molecules that induce symbiosis and subsequent nodulation induction. Nod factors are LCO (lipo-chitin oligosaccharide), a modified beta-1,4-linked N-acetylglucosamine oligosaccharide. This subunit encodes the transporter. In Rhizobium leguminosarum bv. trifolii, this protein is Nodulation protein J (nodJ).